Consider the following 133-residue polypeptide: Large ribosomal subunit protein uL14 (133 aa).

This sequence belongs to the universal ribosomal protein uL14 family. Part of the 50S ribosomal subunit. Forms a cluster with proteins L3 and L24e, part of which may contact the 16S rRNA in 2 intersubunit bridges.

In terms of biological role, binds to 23S rRNA. Forms part of two intersubunit bridges in the 70S ribosome. This is Large ribosomal subunit protein uL14 from Methanopyrus kandleri (strain AV19 / DSM 6324 / JCM 9639 / NBRC 100938).